A 79-amino-acid polypeptide reads, in one-letter code: Large ribosomal subunit protein bL31c (79 aa).

It belongs to the bacterial ribosomal protein bL31 family. Type A subfamily. In terms of assembly, part of the 50S ribosomal subunit.

The protein resides in the plastid. It is found in the chloroplast. In terms of biological role, binds the 23S rRNA. The sequence is that of Large ribosomal subunit protein bL31c from Gracilaria tenuistipitata var. liui (Red alga).